The following is a 504-amino-acid chain: Arrestin-related trafficking adapter 10 (504 aa).

Belongs to the ART10 family.

It localises to the cytoplasm. In terms of biological role, may regulate endocytosis by recruiting RSP5 ubiquitin ligase activity to specific plasma membrane proteins in response to extracellular stimuli. This Candida glabrata (strain ATCC 2001 / BCRC 20586 / JCM 3761 / NBRC 0622 / NRRL Y-65 / CBS 138) (Yeast) protein is Arrestin-related trafficking adapter 10 (ART10).